The following is a 608-amino-acid chain: ATP-binding protein Uup (608 aa).

2 consecutive ABC transporter domains span residues 7 to 217 (APVL…AADA) and 285 to 512 (VEAK…FAPV). ATP is bound by residues 42–49 (GRNGAGKS) and 317–324 (GPNGAGKT). A C-terminal domain (CTD), binds DNA region spans residues 522–608 (AAPAAPKKSA…LEEKKENLAG (87 aa)).

Belongs to the ABC transporter superfamily. ABCF family. Uup subfamily.

The protein localises to the cytoplasm. It carries out the reaction ATP + H2O = ADP + phosphate + H(+). Functionally, probably plays a role in ribosome assembly or function. May be involved in resolution of branched DNA intermediates that result from template switching in postreplication gaps. Binds DNA and has ATPase activity. In terms of biological role, one of a cluster of genes involved in attachment of the holdfast to the cell. The holdfast is a structure that allows the bacteria to firmly adhere to surfaces. The sequence is that of ATP-binding protein Uup from Caulobacter vibrioides (strain ATCC 19089 / CIP 103742 / CB 15) (Caulobacter crescentus).